The following is a 1215-amino-acid chain: Kinesin-like protein KIN-7I (1215 aa).

Residues 3 to 327 (RIHVAVRARP…LQFASRALRV (325 aa)) enclose the Kinesin motor domain. 79 to 86 (GQTNSGKT) contributes to the ATP binding site. Coiled-coil stretches lie at residues 333-414 (VNEI…IENL), 571-646 (ESEA…AAYE), 708-855 (IRDY…KRDS), and 894-979 (DMEA…KEDM).

This sequence belongs to the TRAFAC class myosin-kinesin ATPase superfamily. Kinesin family. KIN-7 subfamily.

The sequence is that of Kinesin-like protein KIN-7I from Oryza sativa subsp. japonica (Rice).